A 282-amino-acid polypeptide reads, in one-letter code: Putative hydrolase Bmul_3283/BMULJ_05242 (282 aa).

3 residues coordinate Mg(2+): E124, E126, and D155.

This sequence belongs to the FAH family. The cofactor is Mg(2+).

The protein is Putative hydrolase Bmul_3283/BMULJ_05242 of Burkholderia multivorans (strain ATCC 17616 / 249).